A 282-amino-acid polypeptide reads, in one-letter code: Bis(5'-nucleosyl)-tetraphosphatase, symmetrical (282 aa).

The protein belongs to the Ap4A hydrolase family.

It catalyses the reaction P(1),P(4)-bis(5'-adenosyl) tetraphosphate + H2O = 2 ADP + 2 H(+). In terms of biological role, hydrolyzes diadenosine 5',5'''-P1,P4-tetraphosphate to yield ADP. In Burkholderia pseudomallei (strain 1106a), this protein is Bis(5'-nucleosyl)-tetraphosphatase, symmetrical.